We begin with the raw amino-acid sequence, 298 residues long: Inosose dehydratase (298 aa).

It belongs to the IolE/MocC family. Glutathione is required as a cofactor. Requires Co(2+) as cofactor. Mn(2+) serves as cofactor.

The catalysed reaction is scyllo-inosose = 3D-3,5/4-trihydroxycyclohexane-1,2-dione + H2O. The protein operates within polyol metabolism; myo-inositol degradation into acetyl-CoA; acetyl-CoA from myo-inositol: step 2/7. Functionally, catalyzes the dehydration of inosose (2-keto-myo-inositol, 2KMI or 2,4,6/3,5-pentahydroxycyclohexanone) to 3D-(3,5/4)-trihydroxycyclohexane-1,2-dione (D-2,3-diketo-4-deoxy-epi-inositol). The sequence is that of Inosose dehydratase from Bacillus cereus (strain AH820).